Consider the following 172-residue polypeptide: Small ribosomal subunit protein uS5 (172 aa).

In terms of domain architecture, S5 DRBM spans 16–79 (LKDRLVAINR…ESAKKNLVKV (64 aa)).

It belongs to the universal ribosomal protein uS5 family. As to quaternary structure, part of the 30S ribosomal subunit. Contacts proteins S4 and S8.

In terms of biological role, with S4 and S12 plays an important role in translational accuracy. Its function is as follows. Located at the back of the 30S subunit body where it stabilizes the conformation of the head with respect to the body. The chain is Small ribosomal subunit protein uS5 from Bacteroides thetaiotaomicron (strain ATCC 29148 / DSM 2079 / JCM 5827 / CCUG 10774 / NCTC 10582 / VPI-5482 / E50).